Consider the following 438-residue polypeptide: Serine hydroxymethyltransferase (438 aa).

Residues L133 and 137–139 (GHL) contribute to the (6S)-5,6,7,8-tetrahydrofolate site. An N6-(pyridoxal phosphate)lysine modification is found at K242.

This sequence belongs to the SHMT family. Homodimer. Pyridoxal 5'-phosphate is required as a cofactor.

The protein resides in the cytoplasm. It catalyses the reaction (6R)-5,10-methylene-5,6,7,8-tetrahydrofolate + glycine + H2O = (6S)-5,6,7,8-tetrahydrofolate + L-serine. Its pathway is one-carbon metabolism; tetrahydrofolate interconversion. The protein operates within amino-acid biosynthesis; glycine biosynthesis; glycine from L-serine: step 1/1. In terms of biological role, catalyzes the reversible interconversion of serine and glycine with tetrahydrofolate (THF) serving as the one-carbon carrier. This reaction serves as the major source of one-carbon groups required for the biosynthesis of purines, thymidylate, methionine, and other important biomolecules. Also exhibits THF-independent aldolase activity toward beta-hydroxyamino acids, producing glycine and aldehydes, via a retro-aldol mechanism. The sequence is that of Serine hydroxymethyltransferase from Brucella ovis (strain ATCC 25840 / 63/290 / NCTC 10512).